The following is a 417-amino-acid chain: Serine hydroxymethyltransferase (417 aa).

(6S)-5,6,7,8-tetrahydrofolate is bound by residues Leu-121 and 125–127 (GHL). An N6-(pyridoxal phosphate)lysine modification is found at Lys-229. Position 354-356 (354-356 (SPF)) interacts with (6S)-5,6,7,8-tetrahydrofolate.

The protein belongs to the SHMT family. Homodimer. The cofactor is pyridoxal 5'-phosphate.

It localises to the cytoplasm. It catalyses the reaction (6R)-5,10-methylene-5,6,7,8-tetrahydrofolate + glycine + H2O = (6S)-5,6,7,8-tetrahydrofolate + L-serine. It participates in one-carbon metabolism; tetrahydrofolate interconversion. Its pathway is amino-acid biosynthesis; glycine biosynthesis; glycine from L-serine: step 1/1. Functionally, catalyzes the reversible interconversion of serine and glycine with tetrahydrofolate (THF) serving as the one-carbon carrier. This reaction serves as the major source of one-carbon groups required for the biosynthesis of purines, thymidylate, methionine, and other important biomolecules. Also exhibits THF-independent aldolase activity toward beta-hydroxyamino acids, producing glycine and aldehydes, via a retro-aldol mechanism. The protein is Serine hydroxymethyltransferase of Dichelobacter nodosus (strain VCS1703A).